Consider the following 126-residue polypeptide: Small ribosomal subunit protein uS12m (126 aa).

The segment covering 1–11 (MATSNQMGANT) has biased composition (polar residues). The segment at 1-21 (MATSNQMGANTRSKKKKKNLK) is disordered. Residues 12–21 (RSKKKKKNLK) are compositionally biased toward basic residues.

It belongs to the universal ribosomal protein uS12 family.

It localises to the mitochondrion. Its function is as follows. Protein S12 is involved in the translation initiation step. The sequence is that of Small ribosomal subunit protein uS12m (RPS12) from Bigelowiella natans (Pedinomonas minutissima).